A 398-amino-acid chain; its full sequence is Elongation factor Tu (398 aa).

The region spanning 10 to 208 is the tr-type G domain; it reads KPHVNVGTIG…ALDDYIPEPE (199 aa). Residues 19–26 form a G1 region; that stretch reads GHVDHGKT. 19–26 lines the GTP pocket; that stretch reads GHVDHGKT. T26 provides a ligand contact to Mg(2+). The interval 61 to 65 is G2; the sequence is GITIA. A G3 region spans residues 82–85; it reads DCPG. Residues 82–86 and 137–140 contribute to the GTP site; these read DCPGH and NKAD. The tract at residues 137 to 140 is G4; sequence NKAD. The segment at 175–177 is G5; that stretch reads SAL.

This sequence belongs to the TRAFAC class translation factor GTPase superfamily. Classic translation factor GTPase family. EF-Tu/EF-1A subfamily. As to quaternary structure, monomer.

It is found in the cytoplasm. The catalysed reaction is GTP + H2O = GDP + phosphate + H(+). In terms of biological role, GTP hydrolase that promotes the GTP-dependent binding of aminoacyl-tRNA to the A-site of ribosomes during protein biosynthesis. This Marinobacter nauticus (strain ATCC 700491 / DSM 11845 / VT8) (Marinobacter aquaeolei) protein is Elongation factor Tu.